A 164-amino-acid chain; its full sequence is Ecotin (164 aa).

A signal peptide spans 1–20 (MKMFVPAVVFAALASASAWA). C72 and C109 are oxidised to a cystine.

The protein belongs to the protease inhibitor I11 (ecotin) family. As to quaternary structure, homodimer.

It localises to the periplasm. In terms of biological role, general inhibitor of pancreatic serine proteases: inhibits chymotrypsin, trypsin, elastases, factor X, kallikrein as well as a variety of other proteases. This is Ecotin from Salmonella enteritidis PT4 (strain P125109).